Reading from the N-terminus, the 221-residue chain is 2-C-methyl-D-erythritol 4-phosphate cytidylyltransferase (221 aa).

The protein belongs to the IspD/TarI cytidylyltransferase family. IspD subfamily.

It carries out the reaction 2-C-methyl-D-erythritol 4-phosphate + CTP + H(+) = 4-CDP-2-C-methyl-D-erythritol + diphosphate. It participates in isoprenoid biosynthesis; isopentenyl diphosphate biosynthesis via DXP pathway; isopentenyl diphosphate from 1-deoxy-D-xylulose 5-phosphate: step 2/6. Functionally, catalyzes the formation of 4-diphosphocytidyl-2-C-methyl-D-erythritol from CTP and 2-C-methyl-D-erythritol 4-phosphate (MEP). The protein is 2-C-methyl-D-erythritol 4-phosphate cytidylyltransferase of Roseobacter denitrificans (strain ATCC 33942 / OCh 114) (Erythrobacter sp. (strain OCh 114)).